A 164-amino-acid polypeptide reads, in one-letter code: Galectin-3 (164 aa).

In terms of domain architecture, Galectin spans S9–L154. The a carbohydrate site is built by H60, R64, N73, and E84.

As to quaternary structure, homotetramer. Oligomerization is required for carbohydrate binding.

Its subcellular location is the secreted. It is found in the extracellular space. The protein resides in the extracellular matrix. The protein localises to the cell wall. Its function is as follows. Binds lactose. May play a role in fruiting body formation. This chain is Galectin-3 (Cgl3), found in Coprinopsis cinerea (strain Okayama-7 / 130 / ATCC MYA-4618 / FGSC 9003) (Inky cap fungus).